The following is a 187-amino-acid chain: Holliday junction branch migration complex subunit RuvA (187 aa).

Residues 1 to 64 (MIEYIRGIIE…EDGFQIFGFK (64 aa)) form a domain I region. The tract at residues 65–136 (RKEELELFEK…ELKDKVPKEV (72 aa)) is domain II. A flexible linker region spans residues 136 to 139 (VVVP). A domain III region spans residues 140–187 (KEDSLLNEALEALLALGYTKSEAIYALSDVNCESVEQAVKEALKKLAK).

It belongs to the RuvA family. As to quaternary structure, homotetramer. Forms an RuvA(8)-RuvB(12)-Holliday junction (HJ) complex. HJ DNA is sandwiched between 2 RuvA tetramers; dsDNA enters through RuvA and exits via RuvB. An RuvB hexamer assembles on each DNA strand where it exits the tetramer. Each RuvB hexamer is contacted by two RuvA subunits (via domain III) on 2 adjacent RuvB subunits; this complex drives branch migration. In the full resolvosome a probable DNA-RuvA(4)-RuvB(12)-RuvC(2) complex forms which resolves the HJ.

The protein resides in the cytoplasm. Its function is as follows. The RuvA-RuvB-RuvC complex processes Holliday junction (HJ) DNA during genetic recombination and DNA repair, while the RuvA-RuvB complex plays an important role in the rescue of blocked DNA replication forks via replication fork reversal (RFR). RuvA specifically binds to HJ cruciform DNA, conferring on it an open structure. The RuvB hexamer acts as an ATP-dependent pump, pulling dsDNA into and through the RuvAB complex. HJ branch migration allows RuvC to scan DNA until it finds its consensus sequence, where it cleaves and resolves the cruciform DNA. The polypeptide is Holliday junction branch migration complex subunit RuvA (Caldanaerobacter subterraneus subsp. tengcongensis (strain DSM 15242 / JCM 11007 / NBRC 100824 / MB4) (Thermoanaerobacter tengcongensis)).